A 1349-amino-acid chain; its full sequence is Indole-3-acetaldehyde oxidase (1349 aa).

The 88-residue stretch at 7–94 (AAVVLAVNGK…RCSVTTSEGI (88 aa)) folds into the 2Fe-2S ferredoxin-type domain. 3 residues coordinate [2Fe-2S] cluster: Cys46, Cys51, and Cys54. One can recognise an FAD-binding PCMH-type domain in the interval 237 to 415 (VPVSDDGWYR…LSIFIPEWGS (179 aa)).

The protein belongs to the xanthine dehydrogenase family. In terms of assembly, aldehyde oxidases (AO) are homodimers and heterodimers of AO subunits. [2Fe-2S] cluster serves as cofactor. The cofactor is FAD. Mo-molybdopterin is required as a cofactor. In terms of tissue distribution, mostly expressed in coleoptiles, and, to a lower extent, in mesocotyl and roots.

It is found in the cytoplasm. It carries out the reaction indole-3-acetaldehyde + O2 + H2O = (indol-3-yl)acetate + H2O2 + H(+). In higher plants aldehyde oxidases (AO) appear to be homo- and heterodimeric assemblies of AO subunits with probably different physiological functions. Involved in the biosynthesis of auxin. This chain is Indole-3-acetaldehyde oxidase (AO2), found in Zea mays (Maize).